The following is a 298-amino-acid chain: Olfactory receptor 52Z1P (298 aa).

The Extracellular portion of the chain corresponds to methionine 1–serine 14. A helical transmembrane segment spans residues isoleucine 15–isoleucine 35. Topologically, residues methionine 36–glutamate 43 are cytoplasmic. Residues proline 44–alanine 64 traverse the membrane as a helical segment. The Extracellular portion of the chain corresponds to proline 65 to serine 85. A disulfide bridge connects residues cysteine 83 and cysteine 164. Residues glutamine 86–phenylalanine 106 traverse the membrane as a helical segment. Residues aspartate 107–lysine 128 lie on the Cytoplasmic side of the membrane. A helical transmembrane segment spans residues isoleucine 129–tyrosine 149. Topologically, residues arginine 150–asparagine 178 are extracellular. The helical transmembrane segment at isoleucine 179–isoleucine 199 threads the bilayer. Residues serine 200 to threonine 223 are Cytoplasmic-facing. A helical membrane pass occupies residues cysteine 224–alanine 244. The Extracellular portion of the chain corresponds to histidine 245 to histidine 257. Residues isoleucine 258 to valine 278 traverse the membrane as a helical segment. Topologically, residues lysine 279–cysteine 298 are cytoplasmic.

It belongs to the G-protein coupled receptor 1 family.

The protein resides in the cell membrane. Odorant receptor. The protein is Olfactory receptor 52Z1P of Homo sapiens (Human).